The sequence spans 286 residues: Shikimate dehydrogenase (NADP(+)) (286 aa).

Residues 19–21 and Thr66 contribute to the shikimate site; that span reads SVS. Lys70 (proton acceptor) is an active-site residue. Asn91 and Asp106 together coordinate shikimate. NADP(+) contacts are provided by residues 130–134 and Ala225; that span reads GAGGS. Tyr227 is a binding site for shikimate. Gly248 serves as a coordination point for NADP(+).

This sequence belongs to the shikimate dehydrogenase family. Homodimer.

It carries out the reaction shikimate + NADP(+) = 3-dehydroshikimate + NADPH + H(+). It participates in metabolic intermediate biosynthesis; chorismate biosynthesis; chorismate from D-erythrose 4-phosphate and phosphoenolpyruvate: step 4/7. Involved in the biosynthesis of the chorismate, which leads to the biosynthesis of aromatic amino acids. Catalyzes the reversible NADPH linked reduction of 3-dehydroshikimate (DHSA) to yield shikimate (SA). The protein is Shikimate dehydrogenase (NADP(+)) of Dehalococcoides mccartyi (strain ATCC BAA-2266 / KCTC 15142 / 195) (Dehalococcoides ethenogenes (strain 195)).